The following is a 315-amino-acid chain: MATDLAMSAELPNSPLAIEYVNDFDLMKFEIKKEPPEADRYCHRLPPGSLSSTPISTPCSSVPSSPSFCAPSPGSQPGQNLVNGVNNNNNNSGNGNNNTQGSSGKPQMEDLYWIPNYQHHISPEALNLTPEDAVEALIGNAHHHHHHHHHQPYEGFRGQQYVGEDLSAATNGHHHPVHHHHHHHGHHAHARLEDRFSDEQLVSMTVRELNRQLRGFSKEEVIRLKQKRRTLKNRGYAQSCRYKRVQQRHMLESEKCTLQSQVEQLKQDVARLIKERDLYKEKYEKLASRAFNGGGNTRDPSSGNHVKTTSTDFFM.

The segment covering 52–104 (STPISTPCSSVPSSPSFCAPSPGSQPGQNLVNGVNNNNNNSGNGNNNTQGSSG) has biased composition (low complexity). 2 disordered regions span residues 52-108 (STPI…KPQM) and 169-191 (ATNGHHHPVHHHHHHHGHHAHAR). The span at 172–189 (GHHHPVHHHHHHHGHHAH) shows a compositional bias: basic residues. The interval 223–248 (RLKQKRRTLKNRGYAQSCRYKRVQQR) is basic motif. The 64-residue stretch at 223–286 (RLKQKRRTLK…DLYKEKYEKL (64 aa)) folds into the bZIP domain. The interaction with DNA stretch occupies residues 229 to 243 (RTLKNRGYAQSCRYK). Residues 251–272 (LESEKCTLQSQVEQLKQDVARL) are leucine-zipper. A disordered region spans residues 290 to 315 (AFNGGGNTRDPSSGNHVKTTSTDFFM). The segment covering 298-315 (RDPSSGNHVKTTSTDFFM) has biased composition (polar residues).

Belongs to the bZIP family. Maf subfamily.

The protein resides in the nucleus. Functionally, transcription factor, possibly involved in transcription regulation during lens development, including that of crystallin genes. Specifically binds to the alphaCE2 enhancer element of crystallin gene. This Danio rerio (Zebrafish) protein is Transcription factor MafAa (mafaa).